The chain runs to 480 residues: tRNA-2-methylthio-N(6)-dimethylallyladenosine synthase (480 aa).

Positions 32 to 149 constitute an MTTase N-terminal domain; sequence RKLYIRTFGC…LPELIRRRRA (118 aa). The [4Fe-4S] cluster site is built by C41, C78, C112, C186, C190, and C193. Residues 172 to 405 enclose the Radical SAM core domain; sequence RIEGATAFVS…QALINAQAAA (234 aa). The 64-residue stretch at 408–471 folds into the TRAM domain; that stretch reads QAMVGTRQRL…PNSLRARVAD (64 aa).

It belongs to the methylthiotransferase family. MiaB subfamily. Monomer. [4Fe-4S] cluster is required as a cofactor.

It is found in the cytoplasm. The catalysed reaction is N(6)-dimethylallyladenosine(37) in tRNA + (sulfur carrier)-SH + AH2 + 2 S-adenosyl-L-methionine = 2-methylsulfanyl-N(6)-dimethylallyladenosine(37) in tRNA + (sulfur carrier)-H + 5'-deoxyadenosine + L-methionine + A + S-adenosyl-L-homocysteine + 2 H(+). In terms of biological role, catalyzes the methylthiolation of N6-(dimethylallyl)adenosine (i(6)A), leading to the formation of 2-methylthio-N6-(dimethylallyl)adenosine (ms(2)i(6)A) at position 37 in tRNAs that read codons beginning with uridine. The sequence is that of tRNA-2-methylthio-N(6)-dimethylallyladenosine synthase from Bordetella petrii (strain ATCC BAA-461 / DSM 12804 / CCUG 43448).